We begin with the raw amino-acid sequence, 868 residues long: Leucine--tRNA ligase (868 aa).

The short motif at 42-52 (PYPSGKLHMGH) is the 'HIGH' region element. The 'KMSKS' region motif lies at 627–631 (KMSKS). K630 contributes to the ATP binding site.

Belongs to the class-I aminoacyl-tRNA synthetase family.

The protein resides in the cytoplasm. It catalyses the reaction tRNA(Leu) + L-leucine + ATP = L-leucyl-tRNA(Leu) + AMP + diphosphate. This is Leucine--tRNA ligase from Pseudomonas putida (strain GB-1).